The primary structure comprises 168 residues: Ribosome maturation factor RimM (168 aa).

The 76-residue stretch at 93–168 (EDEFYQSDLV…IVLNIPEFID (76 aa)) folds into the PRC barrel domain.

This sequence belongs to the RimM family. Binds ribosomal protein uS19.

The protein resides in the cytoplasm. Functionally, an accessory protein needed during the final step in the assembly of 30S ribosomal subunit, possibly for assembly of the head region. Essential for efficient processing of 16S rRNA. May be needed both before and after RbfA during the maturation of 16S rRNA. It has affinity for free ribosomal 30S subunits but not for 70S ribosomes. The chain is Ribosome maturation factor RimM from Wolbachia pipientis wMel.